The chain runs to 1399 residues: DNA-directed RNA polymerase subunit beta' (1399 aa).

Zn(2+)-binding residues include cysteine 70, cysteine 72, cysteine 85, and cysteine 88. 3 residues coordinate Mg(2+): aspartate 460, aspartate 462, and aspartate 464. Zn(2+)-binding residues include cysteine 814, cysteine 888, cysteine 895, and cysteine 898.

This sequence belongs to the RNA polymerase beta' chain family. In terms of assembly, the RNAP catalytic core consists of 2 alpha, 1 beta, 1 beta' and 1 omega subunit. When a sigma factor is associated with the core the holoenzyme is formed, which can initiate transcription. The cofactor is Mg(2+). Zn(2+) is required as a cofactor.

It carries out the reaction RNA(n) + a ribonucleoside 5'-triphosphate = RNA(n+1) + diphosphate. DNA-dependent RNA polymerase catalyzes the transcription of DNA into RNA using the four ribonucleoside triphosphates as substrates. This is DNA-directed RNA polymerase subunit beta' from Pseudomonas entomophila (strain L48).